A 440-amino-acid chain; its full sequence is Chromosome partition protein MukF (440 aa).

Positions 208–236 (LSETSGTLRELQDTLEAAGDKLQANLLRI) are leucine-zipper.

This sequence belongs to the MukF family. Interacts, and probably forms a ternary complex, with MukE and MukB via its C-terminal region. The complex formation is stimulated by calcium or magnesium. It is required for an interaction between MukE and MukB.

The protein resides in the cytoplasm. It localises to the nucleoid. Functionally, involved in chromosome condensation, segregation and cell cycle progression. May participate in facilitating chromosome segregation by condensation DNA from both sides of a centrally located replisome during cell division. Not required for mini-F plasmid partitioning. Probably acts via its interaction with MukB and MukE. Overexpression results in anucleate cells. It has a calcium binding activity. The chain is Chromosome partition protein MukF from Citrobacter koseri (strain ATCC BAA-895 / CDC 4225-83 / SGSC4696).